Here is a 1392-residue protein sequence, read N- to C-terminus: DNA-directed RNA polymerase subunit beta' (1392 aa).

Residues Cys70, Cys72, Cys85, and Cys88 each contribute to the Zn(2+) site. Residues Asp460, Asp462, and Asp464 each contribute to the Mg(2+) site. The Zn(2+) site is built by Cys810, Cys884, Cys891, and Cys894.

The protein belongs to the RNA polymerase beta' chain family. As to quaternary structure, the RNAP catalytic core consists of 2 alpha, 1 beta, 1 beta' and 1 omega subunit. When a sigma factor is associated with the core the holoenzyme is formed, which can initiate transcription. Mg(2+) is required as a cofactor. Zn(2+) serves as cofactor.

It carries out the reaction RNA(n) + a ribonucleoside 5'-triphosphate = RNA(n+1) + diphosphate. DNA-dependent RNA polymerase catalyzes the transcription of DNA into RNA using the four ribonucleoside triphosphates as substrates. The sequence is that of DNA-directed RNA polymerase subunit beta' from Geobacter metallireducens (strain ATCC 53774 / DSM 7210 / GS-15).